The primary structure comprises 280 residues: DegV domain-containing protein Mb2440c (280 aa).

Positions 3–274 constitute a DegV domain; that stretch reads VVVVTDTSCR…AGAVGVCVDV (272 aa). Serine 89 contributes to the hexadecanoate binding site.

May bind long-chain fatty acids, such as palmitate, and may play a role in lipid transport or fatty acid metabolism. In Mycobacterium bovis (strain ATCC BAA-935 / AF2122/97), this protein is DegV domain-containing protein Mb2440c.